A 298-amino-acid chain; its full sequence is Multifunctional dioxygenase ausE (298 aa).

Arg-72 and Gln-127 together coordinate substrate. Residues His-130 and Asp-132 each contribute to the Fe cation site. Thr-167 is a binding site for substrate. Fe cation is bound at residue His-214. Residue Arg-226 participates in substrate binding.

The protein belongs to the PhyH family. Homodimer. Requires Fe cation as cofactor.

It catalyses the reaction preaustinoid A1 + 2-oxoglutarate + O2 = preaustinoid A2 + succinate + CO2 + H2O. The catalysed reaction is preaustinoid A2 + 2-oxoglutarate + O2 = preaustinoid A3 + succinate + CO2 + H2O. It carries out the reaction berkeleyone A + 2-oxoglutarate + O2 = preaustinoid A + succinate + CO2 + H2O. It functions in the pathway secondary metabolite biosynthesis; terpenoid biosynthesis. In terms of biological role, multifunctional dioxygenase; part of the gene cluster B that mediates the biosynthesis of austinol and dehydroaustinol, two fungal meroterpenoids. The first step of the pathway is the synthesis of 3,5-dimethylorsellinic acid by the polyketide synthase ausA. 3,5-dimethylorsellinic acid is then prenylated by the polyprenyl transferase ausN. Further epoxidation by the FAD-dependent monooxygenase ausM and cyclization by the probable terpene cyclase ausL lead to the formation of protoaustinoid A. Protoaustinoid A is then oxidized to spiro-lactone preaustinoid A3 by the combined action of the FAD-binding monooxygenases ausB and ausC, and the dioxygenase ausE. Acid-catalyzed keto-rearrangement and ring contraction of the tetraketide portion of preaustinoid A3 by ausJ lead to the formation of preaustinoid A4. The aldo-keto reductase ausK, with the help of ausH, is involved in the next step by transforming preaustinoid A4 into isoaustinone which is in turn hydroxylated by the P450 monooxygenase ausI to form austinolide. Finally, the cytochrome P450 monooxygenase ausG modifies austinolide to austinol. Austinol can be further modified to dehydroaustinol which forms a diffusible complex with diorcinol that initiates conidiation. Due to genetic rearrangements of the clusters and the subsequent loss of some enzymes, the end products of the Emericella nidulans austinoid biosynthesis clusters are austinol and dehydroaustinol, even if additional enzymes, such as the O-acetyltransferase ausQ and the cytochrome P450 monooxygenase ausR are still functional. The chain is Multifunctional dioxygenase ausE from Emericella nidulans (strain FGSC A4 / ATCC 38163 / CBS 112.46 / NRRL 194 / M139) (Aspergillus nidulans).